We begin with the raw amino-acid sequence, 225 residues long: Small ribosomal subunit protein L51-b (225 aa).

The transit peptide at 1-84 directs the protein to the mitochondrion; the sequence is MKFPDLLRCS…QCAFISSDRF (84 aa).

The protein belongs to the bacterial ribosomal protein bS1 family. As to quaternary structure, component of the mitochondrial small ribosomal subunit (mt-SSU). Mature yeast 74S mitochondrial ribosomes consist of a small (37S) and a large (54S) subunit. The 37S small subunit contains a 15S ribosomal RNA (15S mt-rRNA) and at least 32 different proteins. The 54S large subunit contains a 21S rRNA (21S mt-rRNA) and at least 45 different proteins. This subunit is mutually exclusive with mrp51/small ribosomal subunit protein bS1m.

Its subcellular location is the mitochondrion. In terms of biological role, component of the mitochondrial ribosome (mitoribosome), a dedicated translation machinery responsible for the synthesis of mitochondrial genome-encoded proteins, including at least some of the essential transmembrane subunits of the mitochondrial respiratory chain. The mitoribosomes are attached to the mitochondrial inner membrane and translation products are cotranslationally integrated into the membrane. Functionally interacts with the 5'-UTR of mitochondrial mRNAs. Specifically plays a role in the translation of cob1/cytochrome b and cox3. Has a role in meiosis. The sequence is that of Small ribosomal subunit protein L51-b from Schizosaccharomyces pombe (strain 972 / ATCC 24843) (Fission yeast).